The chain runs to 268 residues: Formamidopyrimidine-DNA glycosylase (268 aa).

Proline 2 serves as the catalytic Schiff-base intermediate with DNA. Glutamate 3 (proton donor) is an active-site residue. Lysine 56 (proton donor; for beta-elimination activity) is an active-site residue. The DNA site is built by histidine 91, arginine 110, and arginine 149. The segment at 234–268 adopts an FPG-type zinc-finger fold; sequence QVYGRFNQACPNCGQPLKRSRIGGRSSHYCEKCQQ. Residue arginine 258 is the Proton donor; for delta-elimination activity of the active site.

The protein belongs to the FPG family. In terms of assembly, monomer. The cofactor is Zn(2+).

The catalysed reaction is Hydrolysis of DNA containing ring-opened 7-methylguanine residues, releasing 2,6-diamino-4-hydroxy-5-(N-methyl)formamidopyrimidine.. The enzyme catalyses 2'-deoxyribonucleotide-(2'-deoxyribose 5'-phosphate)-2'-deoxyribonucleotide-DNA = a 3'-end 2'-deoxyribonucleotide-(2,3-dehydro-2,3-deoxyribose 5'-phosphate)-DNA + a 5'-end 5'-phospho-2'-deoxyribonucleoside-DNA + H(+). Involved in base excision repair of DNA damaged by oxidation or by mutagenic agents. Acts as a DNA glycosylase that recognizes and removes damaged bases. Has a preference for oxidized purines, such as 7,8-dihydro-8-oxoguanine (8-oxoG). Has AP (apurinic/apyrimidinic) lyase activity and introduces nicks in the DNA strand. Cleaves the DNA backbone by beta-delta elimination to generate a single-strand break at the site of the removed base with both 3'- and 5'-phosphates. This chain is Formamidopyrimidine-DNA glycosylase, found in Syntrophomonas wolfei subsp. wolfei (strain DSM 2245B / Goettingen).